The sequence spans 438 residues: GTPase Der (438 aa).

EngA-type G domains are found at residues 2 to 164 (HKVA…PEDD) and 173 to 343 (IRIS…EKWQ). Residues 8–15 (GRPNVGKS), 55–59 (DTGGL), 116–119 (NKID), 179–186 (GRPNVGKS), 226–230 (DTAGI), and 288–291 (NKWD) contribute to the GTP site. One can recognise a KH-like domain in the interval 344 to 428 (SRIGTSELNR…PVRLKWKEKG (85 aa)).

It belongs to the TRAFAC class TrmE-Era-EngA-EngB-Septin-like GTPase superfamily. EngA (Der) GTPase family. As to quaternary structure, associates with the 50S ribosomal subunit.

Functionally, GTPase that plays an essential role in the late steps of ribosome biogenesis. The protein is GTPase Der of Deinococcus radiodurans (strain ATCC 13939 / DSM 20539 / JCM 16871 / CCUG 27074 / LMG 4051 / NBRC 15346 / NCIMB 9279 / VKM B-1422 / R1).